The sequence spans 393 residues: Phosphoenolpyruvate/phosphate translocator 3, chloroplastic (393 aa).

The N-terminal 65 residues, 1 to 65 (MQRAAAASRA…LSGGRAVTAR (65 aa)), are a transit peptide targeting the chloroplast. 7 helical membrane passes run 89 to 109 (LAET…NIYF), 124 to 144 (YTIT…MWAL), 164 to 183 (AAGH…KVAV), 195 to 217 (FFTV…LGSL), 232 to 249 (LSFN…NLLY), 270 to 290 (INLF…LMLF), and 362 to 382 (TPIS…VFLY). Residues 123 to 228 (PYTITAFQLA…PIVGGVALAS (106 aa)) enclose the EamA domain.

It belongs to the TPT transporter family. PPT (TC 2.A.7.9) subfamily.

Its subcellular location is the plastid. The protein resides in the chloroplast membrane. Functionally, phosphoenolpyruvate/phosphate translocator that transports phosphoenolpyruvate (PEP) and dihydroxyacetone phosphate. The polypeptide is Phosphoenolpyruvate/phosphate translocator 3, chloroplastic (PPT3) (Oryza sativa subsp. japonica (Rice)).